Here is a 253-residue protein sequence, read N- to C-terminus: Large ribosomal subunit protein uL4 (253 aa).

This sequence belongs to the universal ribosomal protein uL4 family. In terms of assembly, part of the 50S ribosomal subunit.

Functionally, one of the primary rRNA binding proteins, this protein initially binds near the 5'-end of the 23S rRNA. It is important during the early stages of 50S assembly. It makes multiple contacts with different domains of the 23S rRNA in the assembled 50S subunit and ribosome. Its function is as follows. Forms part of the polypeptide exit tunnel. This Methanococcoides burtonii (strain DSM 6242 / NBRC 107633 / OCM 468 / ACE-M) protein is Large ribosomal subunit protein uL4.